We begin with the raw amino-acid sequence, 86 residues long: Small ribosomal subunit protein bS16 (86 aa).

It belongs to the bacterial ribosomal protein bS16 family.

The sequence is that of Small ribosomal subunit protein bS16 from Hamiltonella defensa subsp. Acyrthosiphon pisum (strain 5AT).